A 473-amino-acid polypeptide reads, in one-letter code: Bifunctional protein HldE (473 aa).

The tract at residues 1 to 316 is ribokinase; sequence MILPDFSLAR…AIAIHGQRAP (316 aa). 193-196 lines the ATP pocket; it reads NLSE. Aspartate 262 is a catalytic residue. The cytidylyltransferase stretch occupies residues 342–473; that stretch reads VTNGCFDLLH…TRIIEAIRNG (132 aa).

The protein in the N-terminal section; belongs to the carbohydrate kinase PfkB family. This sequence in the C-terminal section; belongs to the cytidylyltransferase family. Homodimer.

It catalyses the reaction D-glycero-beta-D-manno-heptose 7-phosphate + ATP = D-glycero-beta-D-manno-heptose 1,7-bisphosphate + ADP + H(+). The enzyme catalyses D-glycero-beta-D-manno-heptose 1-phosphate + ATP + H(+) = ADP-D-glycero-beta-D-manno-heptose + diphosphate. It participates in nucleotide-sugar biosynthesis; ADP-L-glycero-beta-D-manno-heptose biosynthesis; ADP-L-glycero-beta-D-manno-heptose from D-glycero-beta-D-manno-heptose 7-phosphate: step 1/4. The protein operates within nucleotide-sugar biosynthesis; ADP-L-glycero-beta-D-manno-heptose biosynthesis; ADP-L-glycero-beta-D-manno-heptose from D-glycero-beta-D-manno-heptose 7-phosphate: step 3/4. Catalyzes the phosphorylation of D-glycero-D-manno-heptose 7-phosphate at the C-1 position to selectively form D-glycero-beta-D-manno-heptose-1,7-bisphosphate. Functionally, catalyzes the ADP transfer from ATP to D-glycero-beta-D-manno-heptose 1-phosphate, yielding ADP-D-glycero-beta-D-manno-heptose. In Methylococcus capsulatus (strain ATCC 33009 / NCIMB 11132 / Bath), this protein is Bifunctional protein HldE.